Consider the following 142-residue polypeptide: Large ribosomal subunit protein uL11 (142 aa).

This sequence belongs to the universal ribosomal protein uL11 family. In terms of assembly, part of the ribosomal stalk of the 50S ribosomal subunit. Interacts with L10 and the large rRNA to form the base of the stalk. L10 forms an elongated spine to which L12 dimers bind in a sequential fashion forming a multimeric L10(L12)X complex. One or more lysine residues are methylated.

In terms of biological role, forms part of the ribosomal stalk which helps the ribosome interact with GTP-bound translation factors. This chain is Large ribosomal subunit protein uL11, found in Bradyrhizobium sp. (strain ORS 278).